Consider the following 268-residue polypeptide: Small ribosomal subunit protein uS2 (268 aa).

Positions 161 to 179 are laminin-binding; that stretch reads IPCNNDKYSIALMLWMLAR.

The protein belongs to the universal ribosomal protein uS2 family. As to quaternary structure, component of the small ribosomal subunit. Mature ribosomes consist of a small (40S) and a large (60S) subunit. The 40S subunit contains about 33 different proteins and 1 molecule of RNA (18S). The 60S subunit contains about 49 different proteins and 3 molecules of RNA (28S, 5.8S and 5S). Interacts with ribosomal protein S21.

The protein localises to the cytoplasm. Required for the assembly and/or stability of the 40S ribosomal subunit. Required for the processing of the 20S rRNA-precursor to mature 18S rRNA in a late step of the maturation of 40S ribosomal subunits. Binds laminin. The protein is Small ribosomal subunit protein uS2 (egmo3) of Echinococcus granulosus (Hydatid tapeworm).